Here is a 1103-residue protein sequence, read N- to C-terminus: Ubiquitin carboxyl-terminal hydrolase 7 (1103 aa).

Positions methionine 1–glutamine 11 are enriched in low complexity. The disordered stretch occupies residues methionine 1–asparagine 40. Positions methionine 1–lysine 209 are interaction with TSPYL5. The residue at position 19 (serine 19) is a Phosphoserine. Acidic residues predominate over residues glutamate 20 to aspartate 32. Serine 50 and serine 54 each carry phosphoserine. An interaction with p53/TP53 and MDM2 region spans residues serine 54–lysine 209. The 128-residue stretch at glutamate 69–valine 196 folds into the MATH domain. The necessary for nuclear localization stretch occupies residues threonine 71–tryptophan 206. Residues valine 215–glutamate 522 enclose the USP domain. Cysteine 224 functions as the Nucleophile in the catalytic mechanism. Histidine 465 acts as the Proton acceptor in catalysis. The residue at position 870 (lysine 870) is an N6-acetyllysine; alternate. Lysine 870 is covalently cross-linked (Glycyl lysine isopeptide (Lys-Gly) (interchain with G-Cter in SUMO2); alternate). Lysine 870 is covalently cross-linked (Glycyl lysine isopeptide (Lys-Gly) (interchain with G-Cter in ubiquitin); alternate). Residue lysine 883 forms a Glycyl lysine isopeptide (Lys-Gly) (interchain with G-Cter in SUMO2) linkage. Residue serine 964 is modified to Phosphoserine. An N6-acetyllysine mark is found at lysine 1085 and lysine 1097.

It belongs to the peptidase C19 family. Monomer. Homodimer. Part of a complex with DAXX, MDM2, RASSF1 and USP7. Part of a complex with DAXX, MDM2 and USP7. Interacts with MDM2; the interaction is independent of p53/TP53. Interacts with DAXX; the interaction is direct and independent of MDM2 and p53/TP53. Component of a complex composed of KMT2E, OGT and USP7; the complex stabilizes KMT2E, preventing KMT2E ubiquitination and proteasomal-mediated degradation. Interacts (via MATH domain) with KMT2E. Interacts with OGT. Interacts with FOXO4; the interaction is enhanced in presence of hydrogen peroxide and occurs independently of p53/TP53. Interacts with p53/TP53; the interaction is enhanced in response to DNA damage; the interaction is impaired by TSPYL5. Interacts with PTEN; the interaction is direct. Interacts with ATXN1 and the strength of interaction is influenced by the length of the poly-Gln region in ATXN1. A weaker interaction seen with mutants having longer poly-Gln regions. Interacts with KIAA1530/UVSSA. Interacts with MEX3C and antagonizes its ability to degrade mRNA. Interacts with DNMT1 and UHRF1. Interacts with FOXP3. Interacts (via MATH domain) with RNF220. Associated component of the Polycomb group (PcG) multiprotein PRC1-like complex. Interacts with EPOP. Interacts with OTUD4 and USP9X; the interaction is direct. Interacts with CRY2. Interacts with REST. Interacts with ERCC6. Part of a complex consisting of USP7, MAGEL2 and TRIM27; directly interacts with MAGEL2; directly interacts with TRIM27. Polyneddylated. Post-translationally, not sumoylated. In terms of processing, ubiquitinated at Lys-870. Polyubiquitinated. Strongly expressed in the testis, spleen and brain. Weakly expressed in the stomach, small intestine, skeletal muscle and uterus.

The protein localises to the nucleus. The protein resides in the cytoplasm. It is found in the PML body. It localises to the chromosome. It carries out the reaction Thiol-dependent hydrolysis of ester, thioester, amide, peptide and isopeptide bonds formed by the C-terminal Gly of ubiquitin (a 76-residue protein attached to proteins as an intracellular targeting signal).. Functionally, hydrolase that deubiquitinates target proteins such as ARMC5, FOXO4, DEPTOR, KAT5, p53/TP53, MDM2, ERCC6, DNMT1, UHRF1, PTEN, KMT2E/MLL5 and DAXX. Together with DAXX, prevents MDM2 self-ubiquitination and enhances the E3 ligase activity of MDM2 towards p53/TP53, thereby promoting p53/TP53 ubiquitination and proteasomal degradation. Deubiquitinates p53/TP53, preventing degradation of p53/TP53, and enhances p53/TP53-dependent transcription regulation, cell growth repression and apoptosis. Deubiquitinates p53/TP53 and MDM2 and strongly stabilizes p53/TP53 even in the presence of excess MDM2, and also induces p53/TP53-dependent cell growth repression and apoptosis. Deubiquitination of FOXO4 in presence of hydrogen peroxide is not dependent on p53/TP53 and inhibits FOXO4-induced transcriptional activity. In association with DAXX, is involved in the deubiquitination and translocation of PTEN from the nucleus to the cytoplasm, both processes that are counteracted by PML. Deubiquitinates KMT2E preventing KMT2E proteasomal-mediated degradation. Involved in cell proliferation during early embryonic development. Involved in transcription-coupled nucleotide excision repair (TC-NER) in response to UV damage: recruited to DNA damage sites following interaction with KIAA1530/UVSSA and promotes deubiquitination of ERCC6, preventing UV-induced degradation of ERCC6. Involved in maintenance of DNA methylation via its interaction with UHRF1 and DNMT1: acts by mediating deubiquitination of UHRF1 and DNMT1, preventing their degradation and promoting DNA methylation by DNMT1. Deubiquitinates alkylation repair enzyme ALKBH3. OTUD4 recruits USP7 and USP9X to stabilize ALKBH3, thereby promoting the repair of alkylated DNA lesions. Acts as a chromatin regulator via its association with the Polycomb group (PcG) multiprotein PRC1-like complex; may act by deubiquitinating components of the PRC1-like complex. Able to mediate deubiquitination of histone H2B; it is however unsure whether this activity takes place in vivo. Exhibits a preference towards 'Lys-48'-linked ubiquitin chains. Increases regulatory T-cells (Treg) suppressive capacity by deubiquitinating and stabilizing transcription factor FOXP3 which is crucial for Treg cell function. Plays a role in the maintenance of the circadian clock periodicity via deubiquitination and stabilization of the CRY1 and CRY2 proteins. Deubiquitinates REST, thereby stabilizing REST and promoting the maintenance of neural progenitor cells. Deubiquitinates SIRT7, inhibiting SIRT7 histone deacetylase activity and regulating gluconeogenesis. Involved in the regulation of WASH-dependent actin polymerization at the surface of endosomes and the regulation of endosomal protein recycling. It maintains optimal WASH complex activity and precise F-actin levels via deubiquitination of TRIM27 and WASHC1. Mediates the deubiquitination of phosphorylated DEPTOR, promoting its stability and leading to decreased mTORC1 signaling. This chain is Ubiquitin carboxyl-terminal hydrolase 7 (Usp7), found in Rattus norvegicus (Rat).